Here is a 605-residue protein sequence, read N- to C-terminus: MVSVFLSTLLLAAATVQAYLPAQQIDVQSSLLSDPSKVAGKTYDYIIAGGGLTGLTVAAKLTENPKIKVLVIEKGFYESNDGAIIEDPNAYGQIFGTTVDQNYLTVPLINNRTNNIKAGKGLGGSTLINGDSWTRPDKVQIDSWEKVFGMEGWNWDSMFEYMKKAEAARAPTAAQLAAGHYFNATCHGTNGTVQSGARDNGQPWSPIMKALMNTVSALGVPVQQDFLCGHPRGVSMIMNNVDENQVRVDAARAWLLPSYQRPNLEILTGQMVGKVLFKQTASGPQAVGVNFGTNKAVNFDVFAKHEVLLAAGSAISPLILEYSGIGLKSVLDQANVTQLLDLPVGINMQDQTTTTVSSRASAAGAGQGQAVFFANFTETFGDYAPQARELLNTKLDQWAEETVARGGFHNVTALKVQYENYRNWLLDEDVAFAELFMDTEGKINFDLWDLIPFTRGSVHILSSDPYLWQFANDPKFFLNEFDLLGQAAASKLARDLTSQGAMKEYFAGETLPGYNLVENATLSQWSDYVLQNFRPNWHAVSSCSMMSRELGGVVDATAKVYGTQGLRVIDGSIPPTQVSSHVMTIFYGMALKVADAILDDYAKSA.

The first 18 residues, 1–18 (MVSVFLSTLLLAAATVQA), serve as a signal peptide directing secretion. 3 residues coordinate FAD: Leu-52, Thr-53, and Glu-73. N-linked (GlcNAc...) asparagine glycosylation is present at Asn-111. FAD contacts are provided by Ser-125, Asn-129, Gly-130, and Ser-132. N-linked (GlcNAc...) asparagine glycans are attached at residues Asn-183 and Asn-190. Cys-186 and Cys-228 form a disulfide bridge. Residue Val-272 coordinates FAD. N-linked (GlcNAc...) asparagine glycosylation is found at Asn-335, Asn-375, Asn-410, and Asn-519. The active-site Proton acceptor is His-538. O2 is bound by residues Lys-559 and Val-560. Residues Gly-571 and Met-583 each contribute to the FAD site.

It belongs to the GMC oxidoreductase family. In terms of assembly, homodimer. Requires FAD as cofactor.

Its subcellular location is the secreted. The protein localises to the cell wall. It is found in the cytoplasmic vesicle. The enzyme catalyses beta-D-glucose + O2 = D-glucono-1,5-lactone + H2O2. Glucose oxidase catalyzes the oxidation of beta-D-glucose to D-glucono-delta-lactone and hydrogen peroxide in the presence of molecular oxygen. D-glucono-delta-lactone is sequentially hydrolyzed by lactonase to D-gluconic acid, and the resulting hydrogen peroxide is hydrolyzed by catalase to oxygen and water. Glucose oxidase alone indirectly causes toxicity in the presence of glucose and is the active compound of the antifungal antibiotic talaron. Responsible for inhibition of germination of microsclerotia of Verticillium dahliae. This chain is Glucose oxidase, found in Talaromyces flavus.